The chain runs to 247 residues: Protein SODIUM POTASSIUM ROOT DEFECTIVE 3 (247 aa).

The tract at residues 130–166 is disordered; sequence GSTGQDTVATEESEASAPKRGSSGPVEEKKKSSGSGS. One can recognise an HMA domain in the interval 167 to 235; sequence DQVVVLRVSL…KVKNAQFWTP (69 aa). Residues Cys-180 and Cys-183 each contribute to the a metal cation site.

Its subcellular location is the cytoplasm. Functionally, heavy metal-associated protein involved in salt tolerance. The protein is Protein SODIUM POTASSIUM ROOT DEFECTIVE 3 of Arabidopsis thaliana (Mouse-ear cress).